Reading from the N-terminus, the 639-residue chain is UvrABC system protein C (639 aa).

Residues 1 to 16 (MTDLPVDEPDRDDGAD) show a composition bias toward acidic residues. Residues 1–28 (MTDLPVDEPDRDDGADQPDAGADPATPR) form a disordered region. The span at 17-27 (QPDAGADPATP) shows a compositional bias: low complexity. The GIY-YIG domain occupies 42 to 120 (SSPGVYRMID…IKKLKPRYNI (79 aa)). Residues 230-265 (KALQHDLAKRMDEAAQALDYEQAAIFRDRIKALTNV) enclose the UVR domain.

It belongs to the UvrC family. As to quaternary structure, interacts with UvrB in an incision complex.

It localises to the cytoplasm. In terms of biological role, the UvrABC repair system catalyzes the recognition and processing of DNA lesions. UvrC both incises the 5' and 3' sides of the lesion. The N-terminal half is responsible for the 3' incision and the C-terminal half is responsible for the 5' incision. The chain is UvrABC system protein C from Rhodospirillum rubrum (strain ATCC 11170 / ATH 1.1.1 / DSM 467 / LMG 4362 / NCIMB 8255 / S1).